Here is a 436-residue protein sequence, read N- to C-terminus: Phosphomethylpyrimidine synthase (436 aa).

Residues N68, M97, Y126, H166, 188–190 (SRG), 229–232 (DGFR), and E268 each bind substrate. H272 contacts Zn(2+). Position 295 (Y295) interacts with substrate. Residue H336 participates in Zn(2+) binding. [4Fe-4S] cluster contacts are provided by C412, C415, and C419.

This sequence belongs to the ThiC family. As to quaternary structure, homodimer. [4Fe-4S] cluster is required as a cofactor.

It catalyses the reaction 5-amino-1-(5-phospho-beta-D-ribosyl)imidazole + S-adenosyl-L-methionine = 4-amino-2-methyl-5-(phosphooxymethyl)pyrimidine + CO + 5'-deoxyadenosine + formate + L-methionine + 3 H(+). It participates in cofactor biosynthesis; thiamine diphosphate biosynthesis. Catalyzes the synthesis of the hydroxymethylpyrimidine phosphate (HMP-P) moiety of thiamine from aminoimidazole ribotide (AIR) in a radical S-adenosyl-L-methionine (SAM)-dependent reaction. This chain is Phosphomethylpyrimidine synthase, found in Geobacter metallireducens (strain ATCC 53774 / DSM 7210 / GS-15).